We begin with the raw amino-acid sequence, 687 residues long: Glycine--tRNA ligase beta subunit (687 aa).

It belongs to the class-II aminoacyl-tRNA synthetase family. In terms of assembly, tetramer of two alpha and two beta subunits.

It localises to the cytoplasm. The catalysed reaction is tRNA(Gly) + glycine + ATP = glycyl-tRNA(Gly) + AMP + diphosphate. The protein is Glycine--tRNA ligase beta subunit of Neisseria gonorrhoeae (strain ATCC 700825 / FA 1090).